An 879-amino-acid polypeptide reads, in one-letter code: Metabotropic glutamate receptor 3 (879 aa).

The signal sequence occupies residues M1–G24. Topologically, residues D25–A577 are extracellular. C57 and C99 are disulfide-bonded. L-glutamate is bound by residues S151 and A172–T174. N209 carries N-linked (GlcNAc...) asparagine glycosylation. L-glutamate is bound at residue Y222. Cystine bridges form between C240–C527, C361–C373, C412–C419, C509–C528, C513–C531, C534–C546, and C549–C562. N-linked (GlcNAc...) asparagine glycosylation is present at N292. D301 lines the L-glutamate pocket. K389 contacts L-glutamate. 2 N-linked (GlcNAc...) asparagine glycosylation sites follow: N414 and N439. The chain crosses the membrane as a helical span at residues I578–F598. The Cytoplasmic portion of the chain corresponds to I599–E613. The helical transmembrane segment at L614–A634 threads the bilayer. The Extracellular segment spans residues K635 to Q688. A helical transmembrane segment spans residues V689–L709. Topologically, residues E710–S735 are cytoplasmic. A helical transmembrane segment spans residues S736–F756. The Extracellular portion of the chain corresponds to K757–K769. The chain crosses the membrane as a helical span at residues F770–Y790. Residues V791–V807 are Cytoplasmic-facing. Residues S808–F828 form a helical membrane-spanning segment. Residues Q829–L879 are Extracellular-facing.

Belongs to the G-protein coupled receptor 3 family. As to quaternary structure, interacts with TAMALIN.

Its subcellular location is the cell membrane. Its function is as follows. G-protein coupled receptor for glutamate. Ligand binding causes a conformation change that triggers signaling via guanine nucleotide-binding proteins (G proteins) and modulates the activity of down-stream effectors. Signaling inhibits adenylate cyclase activity. The sequence is that of Metabotropic glutamate receptor 3 (GRM3) from Macaca fascicularis (Crab-eating macaque).